Here is a 276-residue protein sequence, read N- to C-terminus: Putative pyruvate, phosphate dikinase regulatory protein (276 aa).

ADP is bound at residue 152-159 (GISRTSKT).

It belongs to the pyruvate, phosphate/water dikinase regulatory protein family. PDRP subfamily.

It carries out the reaction N(tele)-phospho-L-histidyl/L-threonyl-[pyruvate, phosphate dikinase] + ADP = N(tele)-phospho-L-histidyl/O-phospho-L-threonyl-[pyruvate, phosphate dikinase] + AMP + H(+). It catalyses the reaction N(tele)-phospho-L-histidyl/O-phospho-L-threonyl-[pyruvate, phosphate dikinase] + phosphate + H(+) = N(tele)-phospho-L-histidyl/L-threonyl-[pyruvate, phosphate dikinase] + diphosphate. Bifunctional serine/threonine kinase and phosphorylase involved in the regulation of the pyruvate, phosphate dikinase (PPDK) by catalyzing its phosphorylation/dephosphorylation. The chain is Putative pyruvate, phosphate dikinase regulatory protein from Staphylococcus carnosus (strain TM300).